Here is a 233-residue protein sequence, read N- to C-terminus: Ion-translocating oxidoreductase complex subunit E (233 aa).

Helical transmembrane passes span 18-38 (ALVQLLGLCPLLAVSSTATNA), 39-59 (LGLGLATTLVLVCTNTAVSAL), 69-89 (IPIYVMIIASVVSTVQMLINA), 92-112 (FGLYQSLGIFIPLIVTNCIVI), 128-148 (ALDGFAMGMGATCALFVLGAL), and 182-202 (PFLLAMLPPGAFIGLGLLLAG).

It belongs to the NqrDE/RnfAE family. The complex is composed of six subunits: RnfA, RnfB, RnfC, RnfD, RnfE and RnfG.

The protein localises to the cell inner membrane. Functionally, part of a membrane-bound complex that couples electron transfer with translocation of ions across the membrane. The sequence is that of Ion-translocating oxidoreductase complex subunit E from Yersinia pestis bv. Antiqua (strain Angola).